We begin with the raw amino-acid sequence, 519 residues long: Glycogen synthase (519 aa).

A disordered region spans residues 1 to 40; it reads MISAAVEPHVDAFKPDNREPLTPDFATTGKAPGAQRQHNP. Basic and acidic residues predominate over residues 8–21; sequence PHVDAFKPDNREPL. Lysine 57 is an ADP-alpha-D-glucose binding site.

It belongs to the glycosyltransferase 1 family. Bacterial/plant glycogen synthase subfamily.

It catalyses the reaction [(1-&gt;4)-alpha-D-glucosyl](n) + ADP-alpha-D-glucose = [(1-&gt;4)-alpha-D-glucosyl](n+1) + ADP + H(+). Its pathway is glycan biosynthesis; glycogen biosynthesis. Its function is as follows. Synthesizes alpha-1,4-glucan chains using ADP-glucose. The protein is Glycogen synthase of Pseudomonas putida (strain ATCC 47054 / DSM 6125 / CFBP 8728 / NCIMB 11950 / KT2440).